A 118-amino-acid chain; its full sequence is Elicitin (118 aa).

Positions Met-1–Ala-20 are cleaved as a signal peptide. 3 disulfides stabilise this stretch: Cys-23/Cys-91, Cys-47/Cys-76, and Cys-71/Cys-115.

The protein belongs to the elicitin family.

It localises to the secreted. Its function is as follows. Induces local and distal defense responses (incompatible hypersensitive reaction) in plants from the solanaceae and cruciferae families. Elicits leaf necrosis and causes the accumulation of pathogenesis-related proteins. Might interact with the lipidic molecules of the plasma membrane. The protein is Elicitin (PARA1) of Phytophthora nicotianae (Potato buckeye rot agent).